We begin with the raw amino-acid sequence, 135 residues long: MAQTSLEIVSPEKRLLSRSVDMVVIPAAEGELGVLPGHAPMIVLLQGGTIRLYQNGQVTDRLYVAGGFAEITPERCTVLADQARPVAEISATEAEKRLADAEAAYATVDKLDITALDAAMESIQAARAMVEAARH.

The protein belongs to the ATPase epsilon chain family. F-type ATPases have 2 components, CF(1) - the catalytic core - and CF(0) - the membrane proton channel. CF(1) has five subunits: alpha(3), beta(3), gamma(1), delta(1), epsilon(1). CF(0) has three main subunits: a, b and c.

Its subcellular location is the cell inner membrane. Its function is as follows. Produces ATP from ADP in the presence of a proton gradient across the membrane. The protein is ATP synthase epsilon chain of Granulibacter bethesdensis (strain ATCC BAA-1260 / CGDNIH1).